The chain runs to 236 residues: uncharacterized protein (236 aa).

The interval 1–29 (MNNEKNKQDRENLNRQDERKSSEIKSERK) is disordered.

This is an uncharacterized protein from Staphylococcus aureus.